A 224-amino-acid polypeptide reads, in one-letter code: Ribose-5-phosphate isomerase A (224 aa).

Substrate is bound by residues 34-37 (TGST), 87-90 (DGAD), and 100-103 (KGGG). Catalysis depends on glutamate 109, which acts as the Proton acceptor. Substrate is bound at residue lysine 127.

The protein belongs to the ribose 5-phosphate isomerase family. Homodimer.

The catalysed reaction is aldehydo-D-ribose 5-phosphate = D-ribulose 5-phosphate. Its pathway is carbohydrate degradation; pentose phosphate pathway; D-ribose 5-phosphate from D-ribulose 5-phosphate (non-oxidative stage): step 1/1. Its function is as follows. Catalyzes the reversible conversion of ribose-5-phosphate to ribulose 5-phosphate. In Francisella tularensis subsp. tularensis (strain FSC 198), this protein is Ribose-5-phosphate isomerase A.